A 30-amino-acid polypeptide reads, in one-letter code: Cyclotide hyen-E (30 aa).

The cyclopeptide (Gly-Asn) cross-link spans 1–30; that stretch reads GVPCGESCVYIPCFTGIINCSCRDKVCYNN. 3 disulfides stabilise this stretch: cysteine 4–cysteine 20, cysteine 8–cysteine 22, and cysteine 13–cysteine 27.

This is a cyclic peptide. Detected in stems (at protein level).

Its function is as follows. Probably participates in a plant defense mechanism. Has cytotoxic activity against HUVEC cells (LC(50)= 2.17 uM) and various cancer cells including HeLa (LC(50)= 3.05 uM), MCF-7 and K562. Displays very weak hemolytic activity. Binds to and induces leakage in phospholipd membranes, particularly ones containing 1-palmitoyl-2-oleophosphatidylethanolamine (POPE). The sequence is that of Cyclotide hyen-E from Pigea enneasperma (Spade flower).